A 620-amino-acid polypeptide reads, in one-letter code: Transcription factor GTE11 (620 aa).

The disordered stretch occupies residues 1 to 35 (MTVRNGGFPGDYNRNSFDSPGGCDDSPNASKDDET). Positions 124–230 (TSTMLRMKQC…KFFEVRWKTI (107 aa)) constitute a Bromo domain. An NET domain is found at 270 to 351 (NSLLEPAKRV…EFLRENQKKD (82 aa)). Residue Ser-417 is modified to Phosphoserine. Residues 445–620 (EKRYRAALLK…GNEVEEGEID (176 aa)) form a transcription activation domain region. A coiled-coil region spans residues 470-544 (NQNEKRDPET…MEKSVEINEN (75 aa)). Disordered stretches follow at residues 491 to 511 (KKKE…ARRK) and 597 to 620 (EDED…GEID).

As to quaternary structure, interacts with BT1, BT2 and BT4.

The protein localises to the nucleus. The sequence is that of Transcription factor GTE11 (GTE11) from Arabidopsis thaliana (Mouse-ear cress).